The primary structure comprises 352 residues: Inhibin beta C chain (352 aa).

An N-terminal signal peptide occupies residues 1–18 (MTSSLLLAFLLLAPTTVA). A propeptide spanning residues 19–236 (TPRAGGQCPA…VGGKHQIHRR (218 aa)) is cleaved from the precursor. Residues N110, N143, and N161 are each glycosylated (N-linked (GlcNAc...) asparagine). Cystine bridges form between C240-C248, C247-C317, C276-C349, and C280-C351.

The protein belongs to the TGF-beta family. Homodimeric or heterodimeric through association with alpha and beta subunits, linked by one or more disulfide bonds. Inhibins are heterodimers of one alpha and one beta subunit. Activins are homo- or heterodimers of beta subunits only. In terms of tissue distribution, expressed in benign prostatic hyperplasia.

Its subcellular location is the secreted. Functionally, inhibins and activins inhibit and activate, respectively, the secretion of follitropin by the pituitary gland. Inhibins/activins are involved in regulating a number of diverse functions such as hypothalamic and pituitary hormone secretion, gonadal hormone secretion, germ cell development and maturation, erythroid differentiation, insulin secretion, nerve cell survival, embryonic axial development or bone growth, depending on their subunit composition. Inhibins appear to oppose the functions of activins. This chain is Inhibin beta C chain (INHBC), found in Homo sapiens (Human).